The chain runs to 349 residues: tRNA N6-adenosine threonylcarbamoyltransferase (349 aa).

Fe cation is bound by residues H117 and H121. Substrate contacts are provided by residues 139–143 (QVSGG), D172, G185, D189, and N278. D310 is a Fe cation binding site.

This sequence belongs to the KAE1 / TsaD family. Requires Fe(2+) as cofactor.

It localises to the cytoplasm. The catalysed reaction is L-threonylcarbamoyladenylate + adenosine(37) in tRNA = N(6)-L-threonylcarbamoyladenosine(37) in tRNA + AMP + H(+). Required for the formation of a threonylcarbamoyl group on adenosine at position 37 (t(6)A37) in tRNAs that read codons beginning with adenine. Is involved in the transfer of the threonylcarbamoyl moiety of threonylcarbamoyl-AMP (TC-AMP) to the N6 group of A37, together with TsaE and TsaB. TsaD likely plays a direct catalytic role in this reaction. This is tRNA N6-adenosine threonylcarbamoyltransferase from Lactobacillus acidophilus (strain ATCC 700396 / NCK56 / N2 / NCFM).